A 258-amino-acid chain; its full sequence is MKVTFGNEYIKNFLGEFIGTFVLMFLGEGTTANHFAVPIKNDWLRLCIGWGLGVFFGILISAKLSGAHLNLAVTVGLSTIKKFNYKQIPLYFAGQLLGALSATASVYGLYYGFVSDQTIPKFSWETGKHANVHIASAFMHEFILTGILLLIILSVTDENICGKFHVLKVSSIVGLAIICIGISFGGNTGFALNPSRDLGARILSAIAYGFEAFTRDKCYFWIPLIAPIIGSIIFCQIYDKIVAPLVVISEHDKGALEI.

Residues 1-16 (MKVTFGNEYIKNFLGE) are Cytoplasmic-facing. The helical transmembrane segment at 17-37 (FIGTFVLMFLGEGTTANHFAV) threads the bilayer. Residues 38–45 (PIKNDWLR) are Extracellular-facing. A helical transmembrane segment spans residues 46–66 (LCIGWGLGVFFGILISAKLSG). Residues alanine 67 and asparagine 70 each contribute to the glycerol site. Residues 67-87 (AHLNLAVTVGLSTIKKFNYKQ) lie on the Cytoplasmic side of the membrane. The chain crosses the membrane as a helical span at residues 88–108 (IPLYFAGQLLGALSATASVYG). Over 109–133 (LYYGFVSDQTIPKFSWETGKHANVH) the chain is Extracellular. Residues 134–154 (IASAFMHEFILTGILLLIILS) traverse the membrane as a helical segment. Topologically, residues 155–171 (VTDENICGKFHVLKVSS) are cytoplasmic. A helical membrane pass occupies residues 172–192 (IVGLAIICIGISFGGNTGFAL). Residues glycine 189, phenylalanine 190, asparagine 193, and arginine 196 each coordinate glycerol. At 193-217 (NPSRDLGARILSAIAYGFEAFTRDK) the chain is on the extracellular side. Residues 218-238 (CYFWIPLIAPIIGSIIFCQIY) form a helical membrane-spanning segment. At 239–258 (DKIVAPLVVISEHDKGALEI) the chain is on the cytoplasmic side.

The protein belongs to the MIP/aquaporin (TC 1.A.8) family.

The protein resides in the cell membrane. The catalysed reaction is H2O(in) = H2O(out). It carries out the reaction glycerol(in) = glycerol(out). The enzyme catalyses urea(in) = urea(out). Mediates water and glycerol transport across the cell membrane. Permeable to urea. Required for efficient progression of parasites through the liver stages. In Plasmodium berghei (strain Anka), this protein is Aquaglyceroporin.